A 179-amino-acid chain; its full sequence is Large ribosomal subunit protein uL5 (179 aa).

Belongs to the universal ribosomal protein uL5 family. In terms of assembly, part of the 50S ribosomal subunit; part of the 5S rRNA/L5/L18/L25 subcomplex. Contacts the 5S rRNA and the P site tRNA. Forms a bridge to the 30S subunit in the 70S ribosome.

In terms of biological role, this is one of the proteins that bind and probably mediate the attachment of the 5S RNA into the large ribosomal subunit, where it forms part of the central protuberance. In the 70S ribosome it contacts protein S13 of the 30S subunit (bridge B1b), connecting the 2 subunits; this bridge is implicated in subunit movement. Contacts the P site tRNA; the 5S rRNA and some of its associated proteins might help stabilize positioning of ribosome-bound tRNAs. In Xylella fastidiosa (strain M23), this protein is Large ribosomal subunit protein uL5.